We begin with the raw amino-acid sequence, 461 residues long: MIRTRFAPSPTGYLHIGGVRTALFSWAYARKNNGVFVLRIEDTDLERSTPESVKAILDGMHWVGLDYDEGPFYQTHRFDRYKEVIQQLLDSGHAYHCYCSKEELEAMRAEQEARGDKPRYDRRWRPEAGKTLPAIPEGVQPVVRFKTPLSGVVAWDDAVKGRIEISNEELDDLIIARPDGSPTYNFCVVVDDWDMRITHVIRGDDHVNNTPRQINILKALNAPLPVYGHLPMILNEDGQKMSKRRDAVSVVDYADKGILPEALLNYLARLGWGHGDDEFFSMEQFVEWFSLEAVSPSASRFNHEKFMWLNAQHIKAADNARLAELIAPRLAAAHVDTAHGPAIGDVLALVKERVQDLNALALEVDYFYKKREPAAADVEKHLAGDAVERMGRFADRLAALEAWTAESIHELFKPFCADEGIKMGQLGMPLRVLVCGTTQTPSVDAVLALIGKEEVLRRIRG.

The short motif at 8–18 (PSPTGYLHIGG) is the 'HIGH' region element. Residues 240 to 244 (KMSKR) carry the 'KMSKS' region motif. K243 contributes to the ATP binding site.

Belongs to the class-I aminoacyl-tRNA synthetase family. Glutamate--tRNA ligase type 1 subfamily. Monomer.

The protein localises to the cytoplasm. The catalysed reaction is tRNA(Glu) + L-glutamate + ATP = L-glutamyl-tRNA(Glu) + AMP + diphosphate. Catalyzes the attachment of glutamate to tRNA(Glu) in a two-step reaction: glutamate is first activated by ATP to form Glu-AMP and then transferred to the acceptor end of tRNA(Glu). In Chromobacterium violaceum (strain ATCC 12472 / DSM 30191 / JCM 1249 / CCUG 213 / NBRC 12614 / NCIMB 9131 / NCTC 9757 / MK), this protein is Glutamate--tRNA ligase.